The primary structure comprises 856 residues: Genome polyprotein (856 aa).

The Peptidase S30 domain occupies K141–F284. Active-site for P1 proteinase activity residues include H192, D201, and S235. The Involved in interaction with stylet and aphid transmission motif lies at K334–C337. The Involved in virions binding and aphid transmission signature appears at P592–K594. The region spanning L618–G740 is the Peptidase C6 domain. Active-site for helper component proteinase activity residues include C626 and H699.

This sequence belongs to the potyviridae genome polyprotein family. Post-translationally, genome polyprotein of potyviruses undergoes post-translational proteolytic processing by the main proteinase NIa-pro resulting in the production of at least ten individual proteins. The P1 proteinase and the HC-pro cleave only their respective C-termini autocatalytically. 6K1 is essential for proper proteolytic separation of P3 from CI.

It catalyses the reaction Hydrolyzes a Gly-|-Gly bond at its own C-terminus, commonly in the sequence -Tyr-Xaa-Val-Gly-|-Gly, in the processing of the potyviral polyprotein.. Required for aphid transmission and also has proteolytic activity. Only cleaves a Gly-Gly dipeptide at its own C-terminus. Interacts with virions and aphid stylets. Acts as a suppressor of RNA-mediated gene silencing, also known as post-transcriptional gene silencing (PTGS), a mechanism of plant viral defense that limits the accumulation of viral RNAs. May have RNA-binding activity. The chain is Genome polyprotein from Potato virus Y (strain O) (PVY).